The chain runs to 59 residues: Large ribosomal subunit protein uL30 (59 aa).

The protein belongs to the universal ribosomal protein uL30 family. Part of the 50S ribosomal subunit.

This Geotalea uraniireducens (strain Rf4) (Geobacter uraniireducens) protein is Large ribosomal subunit protein uL30.